Here is a 276-residue protein sequence, read N- to C-terminus: Large ribosomal subunit protein uL2 (276 aa).

The segment at 212–276 (NRHRGIRPQT…KLIISRKKHK (65 aa)) is disordered. The span at 257-276 (YKTRKKKASDKLIISRKKHK) shows a compositional bias: basic residues.

The protein belongs to the universal ribosomal protein uL2 family. Part of the 50S ribosomal subunit. Forms a bridge to the 30S subunit in the 70S ribosome.

Functionally, one of the primary rRNA binding proteins. Required for association of the 30S and 50S subunits to form the 70S ribosome, for tRNA binding and peptide bond formation. It has been suggested to have peptidyltransferase activity; this is somewhat controversial. Makes several contacts with the 16S rRNA in the 70S ribosome. This is Large ribosomal subunit protein uL2 from Helicobacter acinonychis (strain Sheeba).